We begin with the raw amino-acid sequence, 614 residues long: Threonine--tRNA ligase (614 aa).

Positions 1–138 (MRTLMIHSDY…HPLSELSRTI (138 aa)) are editing domain. The interval 133-157 (ELSRTITTEPEEESEDSEEEPSEPS) is disordered. Acidic residues predominate over residues 141 to 154 (EPEEESEDSEEEPS). Positions 200-495 (PHVRLMREKE…TDKGNKPSLP (296 aa)) are catalytic. Zn(2+) is bound by residues Cys-292, His-344, and His-466.

Belongs to the class-II aminoacyl-tRNA synthetase family. As to quaternary structure, homodimer. Requires Zn(2+) as cofactor.

Its subcellular location is the cytoplasm. It catalyses the reaction tRNA(Thr) + L-threonine + ATP = L-threonyl-tRNA(Thr) + AMP + diphosphate + H(+). In terms of biological role, catalyzes the attachment of threonine to tRNA(Thr) in a two-step reaction: L-threonine is first activated by ATP to form Thr-AMP and then transferred to the acceptor end of tRNA(Thr). Also edits incorrectly charged L-seryl-tRNA(Thr). The protein is Threonine--tRNA ligase of Methanosphaera stadtmanae (strain ATCC 43021 / DSM 3091 / JCM 11832 / MCB-3).